The following is a 139-amino-acid chain: Ribonuclease P protein component (139 aa).

The protein belongs to the RnpA family. Consists of a catalytic RNA component (M1 or rnpB) and a protein subunit.

The catalysed reaction is Endonucleolytic cleavage of RNA, removing 5'-extranucleotides from tRNA precursor.. RNaseP catalyzes the removal of the 5'-leader sequence from pre-tRNA to produce the mature 5'-terminus. It can also cleave other RNA substrates such as 4.5S RNA. The protein component plays an auxiliary but essential role in vivo by binding to the 5'-leader sequence and broadening the substrate specificity of the ribozyme. The polypeptide is Ribonuclease P protein component (Chlamydia felis (strain Fe/C-56) (Chlamydophila felis)).